A 530-amino-acid polypeptide reads, in one-letter code: Cytochrome P450 2U1 (530 aa).

Transmembrane regions (helical) follow at residues V21–W41, V99–F119, I247–F267, and L328–L348. Residue C476 participates in heme binding. The helical transmembrane segment at L481–L501 threads the bilayer.

It belongs to the cytochrome P450 family. Requires heme as cofactor. Widely expressed. Expressed in heart, brain and liver.

It is found in the endoplasmic reticulum membrane. It localises to the microsome membrane. Its subcellular location is the mitochondrion inner membrane. The enzyme catalyses an omega-methyl-long-chain fatty acid + reduced [NADPH--hemoprotein reductase] + O2 = an omega-hydroxy-long-chain fatty acid + oxidized [NADPH--hemoprotein reductase] + H2O + H(+). It carries out the reaction (5Z,8Z,11Z,14Z)-eicosatetraenoate + reduced [NADPH--hemoprotein reductase] + O2 = 19-hydroxy-(5Z,8Z,11Z,14Z)-eicosatetraenoate + oxidized [NADPH--hemoprotein reductase] + H2O + H(+). The catalysed reaction is (5Z,8Z,11Z,14Z)-eicosatetraenoate + reduced [NADPH--hemoprotein reductase] + O2 = 20-hydroxy-(5Z,8Z,11Z,14Z)-eicosatetraenoate + oxidized [NADPH--hemoprotein reductase] + H2O + H(+). It catalyses the reaction N-[(5Z,8Z,11Z,14Z)-eicosatetraenoyl]-serotonin + reduced [NADPH--hemoprotein reductase] + O2 = 2-oxo-N-[(5Z,8Z,11Z,14Z)-eicosatetraenoyl]-serotonin + oxidized [NADPH--hemoprotein reductase] + H2O + H(+). A cytochrome P450 monooxygenase involved in the metabolism of arachidonic acid and its conjugates. Mechanistically, uses molecular oxygen inserting one oxygen atom into a substrate, and reducing the second into a water molecule, with two electrons provided by NADPH via cytochrome P450 reductase (CPR; NADPH-ferrihemoprotein reductase). Acts as an omega and omega-1 hydroxylase for arachidonic acid and possibly for other long chain fatty acids. May modulate the arachidonic acid signaling pathway and play a role in other fatty acid signaling processes. May down-regulate the biological activities of N-arachidonoyl-serotonin, an endocannabinoid that has anti-nociceptive effects through inhibition of fatty acid amide hydrolase FAAH, TRPV1 receptor and T-type calcium channels. Catalyzes C-2 oxidation of the indole ring of N-arachidonoyl-serotonin forming a less active product 2-oxo-N-arachidonoyl-serotonin. This Mus musculus (Mouse) protein is Cytochrome P450 2U1.